Consider the following 387-residue polypeptide: Sorting nexin-7 (387 aa).

The PX domain maps to lysine 30 to leucine 151. A 1,2-diacyl-sn-glycero-3-phospho-(1D-myo-inositol-3-phosphate) contacts are provided by arginine 73, glutamine 75, lysine 103, and arginine 117. The 210-residue stretch at glycine 178–proline 387 folds into the BAR domain.

It belongs to the sorting nexin family. As to quaternary structure, heterodimer; heterodimerizes with SNX4.

The protein resides in the early endosome membrane. Its function is as follows. Involved in the regulation of endocytosis and in several stages of intracellular trafficking. Together with SNX4, involved in autophagosome assembly by regulating trafficking and recycling of phospholipid scramblase ATG9A. In Macaca fascicularis (Crab-eating macaque), this protein is Sorting nexin-7 (SNX7).